The chain runs to 105 residues: uncharacterized protein (105 aa).

Residues 13–35 (LLFAFVVVIVVLTLSYVYAQNII) form a helical membrane-spanning segment.

Its subcellular location is the membrane. This is an uncharacterized protein from Archaeoglobus fulgidus (strain ATCC 49558 / DSM 4304 / JCM 9628 / NBRC 100126 / VC-16).